Reading from the N-terminus, the 278-residue chain is Deoxyribonuclease-1-like 2 (278 aa).

Positions Met1–Ala21 are cleaved as a signal peptide. Active-site residues include Glu99 and His150. Residues Cys189 and Cys225 are joined by a disulfide bond.

Belongs to the DNase I family. It depends on Mg(2+) as a cofactor. Ca(2+) is required as a cofactor.

The protein resides in the cytoplasm. Its subcellular location is the secreted. In terms of biological role, divalent cation-dependent acid DNA endonuclease involved in the breakdown of the nucleus during corneocyte formation of epidermal keratinocytes. May play an immune role by eliminating harmful DNA released into the extracellular environment by damaged epidermal cells. This chain is Deoxyribonuclease-1-like 2 (Dnase1l2), found in Mus musculus (Mouse).